A 268-amino-acid chain; its full sequence is Glutamate racemase (268 aa).

Residues 9–10 and 41–42 contribute to the substrate site; these read DS and YG. C73 serves as the catalytic Proton donor/acceptor. Residue 74–75 coordinates substrate; that stretch reads NS. C183 functions as the Proton donor/acceptor in the catalytic mechanism. 184–185 lines the substrate pocket; it reads TH.

This sequence belongs to the aspartate/glutamate racemases family.

The catalysed reaction is L-glutamate = D-glutamate. The protein operates within cell wall biogenesis; peptidoglycan biosynthesis. Provides the (R)-glutamate required for cell wall biosynthesis. The polypeptide is Glutamate racemase (Shewanella pealeana (strain ATCC 700345 / ANG-SQ1)).